The following is a 709-amino-acid chain: DNA ligase (709 aa).

A disordered region spans residues 1 to 20 (MTATHRGAQADASAPAGPLP). NAD(+)-binding positions include 52 to 56 (DAEYD), 101 to 102 (SL), and Glu146. Lys148 serves as the catalytic N6-AMP-lysine intermediate. Positions 169, 205, 322, and 346 each coordinate NAD(+). Cys440, Cys443, Cys458, and Cys464 together coordinate Zn(2+). Residues 623-709 (KAPAPLSGKT…AEAGAAPAQE (87 aa)) enclose the BRCT domain.

Belongs to the NAD-dependent DNA ligase family. LigA subfamily. Requires Mg(2+) as cofactor. Mn(2+) is required as a cofactor.

It catalyses the reaction NAD(+) + (deoxyribonucleotide)n-3'-hydroxyl + 5'-phospho-(deoxyribonucleotide)m = (deoxyribonucleotide)n+m + AMP + beta-nicotinamide D-nucleotide.. DNA ligase that catalyzes the formation of phosphodiester linkages between 5'-phosphoryl and 3'-hydroxyl groups in double-stranded DNA using NAD as a coenzyme and as the energy source for the reaction. It is essential for DNA replication and repair of damaged DNA. This is DNA ligase from Cupriavidus necator (strain ATCC 17699 / DSM 428 / KCTC 22496 / NCIMB 10442 / H16 / Stanier 337) (Ralstonia eutropha).